A 320-amino-acid polypeptide reads, in one-letter code: MRQTKTGILLANLGTPDAPTPEAVKRYLKQFLSDRRVVDTSRLLWWPLLRGVILPLRSPRVAKLYASVWMEGGSPLMVYSRQQQQALAQRLPETPVALGMSYGSPSLESAVDELLAEHVDHIVVLPLYPQYSCSTVGAVWDELARILARKRSIPGISFIRDYADNHDYINALANSVRASFAKHGEPDLLLLSYHGIPQRYADEGDDYPQRCRTTTRELASALGMAPEKVMMTFQSRFGREPWLMPYTDETLKMLGEKGVGHIQVMCPGFAADCLETLEEIAEQNREVFLGAGGKKYEYIPALNATPEHIEMMANLVAAYR.

Fe cation-binding residues include His194 and Glu275.

The protein belongs to the ferrochelatase family. As to quaternary structure, monomer.

Its subcellular location is the cytoplasm. The catalysed reaction is heme b + 2 H(+) = protoporphyrin IX + Fe(2+). It functions in the pathway porphyrin-containing compound metabolism; protoheme biosynthesis; protoheme from protoporphyrin-IX: step 1/1. In terms of biological role, catalyzes the ferrous insertion into protoporphyrin IX. In Escherichia coli O9:H4 (strain HS), this protein is Ferrochelatase.